Reading from the N-terminus, the 131-residue chain is Histone H2A.1 (131 aa).

At Ser2 the chain carries N-acetylserine. 2 positions are modified to N6-acetyllysine: Lys4 and Lys7. Residue Gln105 is modified to N5-methylglutamine. Lys126 participates in a covalent cross-link: Glycyl lysine isopeptide (Lys-Gly) (interchain with G-Cter in SUMO). Ser128 is modified (phosphoserine). The short motif at 128–129 is the [ST]-Q motif element; it reads SQ.

Belongs to the histone H2A family. The nucleosome is a histone octamer containing two molecules each of H2A, H2B, H3 and H4 assembled in one H3-H4 heterotetramer and two H2A-H2B heterodimers. The octamer wraps approximately 147 bp of DNA. Phosphorylated to form H2AS128ph (gamma-H2A) in response to DNA double-strand breaks (DSBs) generated by exogenous genotoxic agents and by stalled replication forks. Phosphorylation is dependent on the DNA damage checkpoint kinases MEC1/ATR and TEL1/ATM, spreads on either side of a detected DSB site and may mark the surrounding chromatin for recruitment of proteins required for DNA damage signaling and repair. Gamma-H2A is removed from the DNA prior to the strand invasion-primer extension step of the repair process and subsequently dephosphorylated by PPH3, a component of the histone H2A phosphatase complex (HTP-C). Dephosphorylation is necessary for efficient recovery from the DNA damage checkpoint. Post-translationally, sumoylation on Lys-126 may lead to transcriptional repression. In terms of processing, acetylated by ESA1 to form H2AK4ac and H2AK7ac.

It localises to the nucleus. Its subcellular location is the chromosome. Its function is as follows. Core component of nucleosome which plays a central role in DNA double strand break (DSB) repair. Nucleosomes wrap and compact DNA into chromatin, limiting DNA accessibility to the cellular machineries which require DNA as a template. Histones thereby play a central role in transcription regulation, DNA repair, DNA replication and chromosomal stability. DNA accessibility is regulated via a complex set of post-translational modifications of histones, also called histone code, and nucleosome remodeling. In Eremothecium gossypii (strain ATCC 10895 / CBS 109.51 / FGSC 9923 / NRRL Y-1056) (Yeast), this protein is Histone H2A.1 (HTA1).